The primary structure comprises 407 residues: Transcriptional regulator alnR (407 aa).

Residues 23–53 constitute a DNA-binding region (zn(2)-C6 fungal-type); sequence SCDTCQEAKVKCSQHKPSCHRCLRHRQPCVY. The tract at residues 53–85 is disordered; sequence YSPQRRSGRPPKRPSPSSRLGPESNNSGDDIHN. Residues 75–85 show a composition bias toward polar residues; it reads ESNNSGDDIHN.

Its subcellular location is the nucleus. Its function is as follows. Transcriptional regulator involved in the positive regulation of the expression of the gene cluster that mediates the biosynthesis of asperlin, a polyketide showing anti-inflammatory, antitumor and antibiotic activities. The sequence is that of Transcriptional regulator alnR from Emericella nidulans (strain FGSC A4 / ATCC 38163 / CBS 112.46 / NRRL 194 / M139) (Aspergillus nidulans).